Consider the following 262-residue polypeptide: Cell division protein FtsQ (262 aa).

At 1–20 (MSWSDKRRHWRARKSQVNWY) the chain is on the cytoplasmic side. The helical transmembrane segment at 21-41 (LWSGIGFLSLVIGSFVFGGYL) threads the bilayer. Over 42-262 (LHKFLNDAST…EPIINDEKPR (221 aa)) the chain is Periplasmic. The POTRA domain occupies 52-121 (LPIEAVAIKG…AKLRVYLQEQ (70 aa)).

The protein belongs to the FtsQ/DivIB family. FtsQ subfamily. Part of a complex composed of FtsB, FtsL and FtsQ.

Its subcellular location is the cell inner membrane. Essential cell division protein. May link together the upstream cell division proteins, which are predominantly cytoplasmic, with the downstream cell division proteins, which are predominantly periplasmic. May control correct divisome assembly. The protein is Cell division protein FtsQ of Shewanella oneidensis (strain ATCC 700550 / JCM 31522 / CIP 106686 / LMG 19005 / NCIMB 14063 / MR-1).